A 391-amino-acid chain; its full sequence is Putative glutamate--cysteine ligase 2-2 (391 aa).

This sequence belongs to the glutamate--cysteine ligase type 2 family. YbdK subfamily.

The catalysed reaction is L-cysteine + L-glutamate + ATP = gamma-L-glutamyl-L-cysteine + ADP + phosphate + H(+). Functionally, ATP-dependent carboxylate-amine ligase which exhibits weak glutamate--cysteine ligase activity. In Saccharopolyspora erythraea (strain ATCC 11635 / DSM 40517 / JCM 4748 / NBRC 13426 / NCIMB 8594 / NRRL 2338), this protein is Putative glutamate--cysteine ligase 2-2.